Consider the following 278-residue polypeptide: Sulfur carrier protein FdhD (278 aa).

The Cysteine persulfide intermediate role is filled by C124.

The protein belongs to the FdhD family.

It is found in the cytoplasm. Its function is as follows. Required for formate dehydrogenase (FDH) activity. Acts as a sulfur carrier protein that transfers sulfur from IscS to the molybdenum cofactor prior to its insertion into FDH. In Burkholderia cenocepacia (strain ATCC BAA-245 / DSM 16553 / LMG 16656 / NCTC 13227 / J2315 / CF5610) (Burkholderia cepacia (strain J2315)), this protein is Sulfur carrier protein FdhD.